A 106-amino-acid polypeptide reads, in one-letter code: Urease subunit beta (106 aa).

Belongs to the urease beta subunit family. As to quaternary structure, heterotrimer of UreA (gamma), UreB (beta) and UreC (alpha) subunits. Three heterotrimers associate to form the active enzyme.

The protein resides in the cytoplasm. It carries out the reaction urea + 2 H2O + H(+) = hydrogencarbonate + 2 NH4(+). The protein operates within nitrogen metabolism; urea degradation; CO(2) and NH(3) from urea (urease route): step 1/1. This Synechococcus sp. (strain CC9311) protein is Urease subunit beta.